The primary structure comprises 98 residues: MRTQVLFLVLEVAAMASGDDTPHVYCGRRLAIMLSYLCDNQYLMKRTPYTSSESEGYGWRWLAPQRARQLAGARGKRQGIAEECCNKPCTEDELLGYC.

The first 18 residues, 1 to 18, serve as a signal peptide directing secretion; sequence MRTQVLFLVLEVAAMASG. 3 cysteine pairs are disulfide-bonded: Cys26-Cys85, Cys38-Cys98, and Cys84-Cys89. Residues 47-75 constitute a propeptide, c peptide like; the sequence is TPYTSSESEGYGWRWLAPQRARQLAGARG.

The protein belongs to the insulin family. In terms of assembly, heterodimer of a B chain and an A chain linked by two disulfide bonds.

The protein resides in the secreted. In terms of biological role, brain peptide responsible for activation of prothoracic glands to produce ecdysone in insects. In Samia cynthia (Ailanthus silkmoth), this protein is Bombyxin A-3 homolog (SBXA3).